The following is a 131-amino-acid chain: MAKPSGKSTTKKKVKKTVVDGIAHIHASFNNTIVTITDRQGNTLSWATAGGSGFRGSRKSTPFAAQVAAERAGQAAQDYGLKNLDVEVKGPGPGRESAVRALNNIGYKVNNITDVTPIPHNGCRPPKKRRV.

It belongs to the universal ribosomal protein uS11 family. As to quaternary structure, part of the 30S ribosomal subunit. Interacts with proteins S7 and S18. Binds to IF-3.

Functionally, located on the platform of the 30S subunit, it bridges several disparate RNA helices of the 16S rRNA. Forms part of the Shine-Dalgarno cleft in the 70S ribosome. This chain is Small ribosomal subunit protein uS11, found in Saccharophagus degradans (strain 2-40 / ATCC 43961 / DSM 17024).